Consider the following 308-residue polypeptide: Ribosomal RNA small subunit methyltransferase H (308 aa).

S-adenosyl-L-methionine contacts are provided by residues 33-35, aspartate 51, phenylalanine 82, aspartate 96, and glutamine 103; that span reads GGY.

It belongs to the methyltransferase superfamily. RsmH family.

The protein localises to the cytoplasm. The catalysed reaction is cytidine(1402) in 16S rRNA + S-adenosyl-L-methionine = N(4)-methylcytidine(1402) in 16S rRNA + S-adenosyl-L-homocysteine + H(+). Its function is as follows. Specifically methylates the N4 position of cytidine in position 1402 (C1402) of 16S rRNA. In Rickettsia canadensis (strain McKiel), this protein is Ribosomal RNA small subunit methyltransferase H.